A 479-amino-acid polypeptide reads, in one-letter code: PTS system glucose-specific EIICB component (479 aa).

A PTS EIIC type-1 domain is found at 1 to 388 (MFKNAFSNLQ…FNLKTPGREK (388 aa)). The next 9 membrane-spanning stretches (helical) occupy residues 15-35 (SLML…IGSA), 51-71 (AGSS…ALGF), 80-100 (LAAV…IPIF), 112-132 (YLLD…AYIF), 152-172 (FVPI…SIIW), 252-272 (GGFI…WHCA), 280-300 (IGGI…TEPI), 305-325 (ILVA…AFPI), and 356-376 (LFPI…YFMI). One can recognise a PTS EIIB type-1 domain in the interval 399–479 (KETALLVISI…IDNYMSNTNQ (81 aa)). Residue Cys-421 is the Phosphocysteine intermediate; for EIIB activity of the active site. Residue Cys-421 is modified to Phosphocysteine.

It localises to the cell inner membrane. The enzyme catalyses N(pros)-phospho-L-histidyl-[protein] + D-glucose(out) = D-glucose 6-phosphate(in) + L-histidyl-[protein]. In terms of biological role, the phosphoenolpyruvate-dependent sugar phosphotransferase system (sugar PTS), a major carbohydrate active transport system, catalyzes the phosphorylation of incoming sugar substrates concomitantly with their translocation across the cell membrane. The enzyme II complex composed of PtsG and Crr is involved in glucose transport. The sequence is that of PTS system glucose-specific EIICB component (ptsG) from Buchnera aphidicola subsp. Baizongia pistaciae (strain Bp).